Consider the following 360-residue polypeptide: Alpha-N-acetyl-neuraminyl-2,3-beta-galactosyl-1,3-N-acetyl-galactosaminide alpha-2,6-sialyltransferase (360 aa).

Residues 1-71 lie on the Cytoplasmic side of the membrane; the sequence is MEHVVTCWRL…PGRLLLLTLC (71 aa). Residues 72–94 form a helical; Signal-anchor for type II membrane protein membrane-spanning segment; sequence ILTFSAVCVFLCCWACLPLCLAT. Over 95–360 the chain is Lumenal; sequence CLDRHLPAAP…VFAHPSWRAK (266 aa). Cys-134 and Cys-283 are oxidised to a cystine. N-linked (GlcNAc...) asparagine glycosylation is present at Asn-193.

This sequence belongs to the glycosyltransferase 29 family. High expression in brain and colon and to a lesser extent in lung, heart, kidney, spleen and thymus.

It is found in the golgi apparatus membrane. It catalyses the reaction an alpha-Neu5Ac-(2-&gt;3)-beta-D-Gal-(1-&gt;3)-D-GlcNAc derivative + CMP-N-acetyl-beta-neuraminate = an alpha-Neu5Ac-(2-&gt;3)-beta-D-Gal-(1-&gt;3)-[alpha-Neu5Ac-(2-&gt;6)]-D-GlcNAc derivative + CMP + H(+). The catalysed reaction is N-acetyl-alpha-neuraminosyl-(2-&gt;3)-beta-D-galactosyl-(1-&gt;3)-N-acetyl-D-galactosamine + CMP-N-acetyl-beta-neuraminate = N-acetyl-alpha-neuraminosyl-(2-&gt;3)-beta-D-galactosyl-(1-&gt;3)-[N-acetyl-alpha-neuraminosyl-(2-&gt;6)]-N-acetyl-D-galactosamine + CMP + H(+). It carries out the reaction a ganglioside GM1b (d18:1(4E)) + CMP-N-acetyl-beta-neuraminate = a ganglioside GD1alpha (d18:1(4E)) + CMP + H(+). The enzyme catalyses 3-O-[alpha-Neu5Ac-(2-&gt;3)-beta-D-Gal-(1-&gt;3)-alpha-D-GalNAc]-L-Ser-[protein] + CMP-N-acetyl-beta-neuraminate = a 3-O-{alpha-Neu5Ac-(2-&gt;3)-beta-D-Gal-(1-&gt;3)-[alpha-Neu5Ac-(2-&gt;6)]-alpha-D-GalNAc}-L-seryl-[protein] + CMP + H(+). It catalyses the reaction 3-O-[alpha-Neu5Ac-(2-&gt;3)-beta-D-Gal-(1-&gt;3)-alpha-D-GalNAc]-L-Thr-[protein] + CMP-N-acetyl-beta-neuraminate = a 3-O-{alpha-Neu5Ac-(2-&gt;3)-beta-D-Gal-(1-&gt;3)-[alpha-Neu5Ac-(2-&gt;6)]-alpha-D-GalNAc}-L-threonyl-[protein] + CMP + H(+). It functions in the pathway protein modification; protein glycosylation. It participates in glycolipid biosynthesis. Functionally, transfers the sialyl group (N-acetyl-alpha-neuraminyl or NeuAc) from CMP-NeuAc to the GalNAc residue on the NeuAc-alpha-2,3-Gal-beta-1,3-GalNAc sequence of glycoproteins and glycolipids forming an alpha-2,6-linkage. Produces branched type disialyl structures by transfer of a sialyl group onto a GalNAc residue inside the backbone core chains. Prefers O-glycans to glycoproteins or glycolipids. This chain is Alpha-N-acetyl-neuraminyl-2,3-beta-galactosyl-1,3-N-acetyl-galactosaminide alpha-2,6-sialyltransferase (St6galnac4), found in Mus musculus (Mouse).